Here is a 32-residue protein sequence, read N- to C-terminus: Fibrinolytic enzyme 2 (32 aa).

A Peptidase S8 domain is found at 1 to 32; the sequence is ISGTSMSCPHVAGRAYVLDTSLRVYLLDTGLR. Ser5 serves as the catalytic Charge relay system.

It belongs to the peptidase S8 family.

Inhibited by PMSF. Not inhibited by benzamidine, aprotinin, SBTI, EDTA, EGTA, 2-mercaptoethanol, iodoacetic acid or pepstatin A. Functionally, serine protease. Has fibrinolytic and fibrinogenolytic but no plasminogenolytic activity. Cleaves after Arg and Lys residues. Cleaves fibrinogen alpha chain, beta chain and gamma chain in that order. In Hediste japonica (Polychaete worm), this protein is Fibrinolytic enzyme 2.